Consider the following 338-residue polypeptide: Citramalyl-CoA lyase, mitochondrial (338 aa).

The transit peptide at Met1 to Lys20 directs the protein to the mitochondrion. Tyr48, Lys55, and Lys59 together coordinate substrate. Lys55, Lys59, and Lys64 each carry N6-acetyllysine. An N6-acetyllysine; alternate mark is found at Lys80 and Lys90. N6-succinyllysine; alternate is present on residues Lys80 and Lys90. Arg105 lines the substrate pocket. Residues Glu169 and Asp204 each contribute to the Mg(2+) site. A substrate-binding site is contributed by Ile270–His271. Lys307 is modified (N6-succinyllysine). The active site involves Asp318.

Belongs to the HpcH/HpaI aldolase family. Citrate lyase beta subunit-like subfamily. In terms of assembly, homotrimer. Requires Mg(2+) as cofactor. Detected in brown fat, brain, liver, kidney, heart, skeletal muscle and ovary (at protein level).

It is found in the mitochondrion. The catalysed reaction is glyoxylate + acetyl-CoA + H2O = (S)-malate + CoA + H(+). The enzyme catalyses propanoyl-CoA + glyoxylate + H2O = 3-methylmalate + CoA + H(+). It catalyses the reaction (3S)-citramalyl-CoA = pyruvate + acetyl-CoA. It carries out the reaction (S)-malyl-CoA + H2O = (S)-malate + CoA + H(+). Mitochondrial citramalyl-CoA lyase indirectly involved in the vitamin B12 metabolism. Converts citramalyl-CoA into acetyl-CoA and pyruvate in the C5-dicarboxylate catabolism pathway. The C5-dicarboxylate catabolism pathway is required to detoxify itaconate, a vitamin B12-poisoning metabolite. Also acts as a malate synthase in vitro, converting glyoxylate and acetyl-CoA to malate. Also displays malyl-CoA thioesterase activity. Also acts as a beta-methylmalate synthase in vitro, by mediating conversion of glyoxylate and propionyl-CoA to beta-methylmalate. Also has very weak citramalate synthase activity in vitro. In Mus musculus (Mouse), this protein is Citramalyl-CoA lyase, mitochondrial.